The sequence spans 200 residues: Holliday junction resolvase RecU (200 aa).

The segment at 1–27 is disordered; sequence MALKYPSGKEYRGNKPNAARRPAADYA. Mg(2+)-binding residues include Thr84, Asp86, Glu99, and Gln118.

This sequence belongs to the RecU family. In terms of assembly, homodimer. Mg(2+) serves as cofactor.

It localises to the cytoplasm. The catalysed reaction is Endonucleolytic cleavage at a junction such as a reciprocal single-stranded crossover between two homologous DNA duplexes (Holliday junction).. Endonuclease that resolves Holliday junction intermediates in genetic recombination. Cleaves mobile four-strand junctions by introducing symmetrical nicks in paired strands. Promotes annealing of linear ssDNA with homologous dsDNA. Required for DNA repair, homologous recombination and chromosome segregation. The protein is Holliday junction resolvase RecU of Geobacillus kaustophilus (strain HTA426).